The sequence spans 176 residues: Peptide deformylase 2 (176 aa).

Residues C99 and H141 each coordinate Fe cation. Residue E142 is part of the active site. H145 serves as a coordination point for Fe cation.

This sequence belongs to the polypeptide deformylase family. Fe(2+) serves as cofactor.

It carries out the reaction N-terminal N-formyl-L-methionyl-[peptide] + H2O = N-terminal L-methionyl-[peptide] + formate. Removes the formyl group from the N-terminal Met of newly synthesized proteins. Requires at least a dipeptide for an efficient rate of reaction. N-terminal L-methionine is a prerequisite for activity but the enzyme has broad specificity at other positions. The polypeptide is Peptide deformylase 2 (Bordetella bronchiseptica (strain ATCC BAA-588 / NCTC 13252 / RB50) (Alcaligenes bronchisepticus)).